Consider the following 91-residue polypeptide: Small ribosomal subunit protein uS15 (91 aa).

Belongs to the universal ribosomal protein uS15 family. Part of the 30S ribosomal subunit. Forms a bridge to the 50S subunit in the 70S ribosome, contacting the 23S rRNA.

In terms of biological role, one of the primary rRNA binding proteins, it binds directly to 16S rRNA where it helps nucleate assembly of the platform of the 30S subunit by binding and bridging several RNA helices of the 16S rRNA. Forms an intersubunit bridge (bridge B4) with the 23S rRNA of the 50S subunit in the ribosome. This Rickettsia typhi (strain ATCC VR-144 / Wilmington) protein is Small ribosomal subunit protein uS15.